Reading from the N-terminus, the 1269-residue chain is DNA-directed RNA polymerase subunit beta (1269 aa).

The protein belongs to the RNA polymerase beta chain family. The RNAP catalytic core consists of 2 alpha, 1 beta, 1 beta' and 1 omega subunit. When a sigma factor is associated with the core the holoenzyme is formed, which can initiate transcription.

It carries out the reaction RNA(n) + a ribonucleoside 5'-triphosphate = RNA(n+1) + diphosphate. Functionally, DNA-dependent RNA polymerase catalyzes the transcription of DNA into RNA using the four ribonucleoside triphosphates as substrates. This Porphyromonas gingivalis (strain ATCC BAA-308 / W83) protein is DNA-directed RNA polymerase subunit beta.